We begin with the raw amino-acid sequence, 465 residues long: Glutamate--tRNA ligase (465 aa).

The 'HIGH' region motif lies at 8–18 (PSPTGDLHIGG). The 'KMSKS' region signature appears at 235 to 239 (RLSKR). Lys238 serves as a coordination point for ATP.

This sequence belongs to the class-I aminoacyl-tRNA synthetase family. Glutamate--tRNA ligase type 1 subfamily. In terms of assembly, monomer.

It is found in the cytoplasm. The enzyme catalyses tRNA(Glu) + L-glutamate + ATP = L-glutamyl-tRNA(Glu) + AMP + diphosphate. Functionally, catalyzes the attachment of glutamate to tRNA(Glu) in a two-step reaction: glutamate is first activated by ATP to form Glu-AMP and then transferred to the acceptor end of tRNA(Glu). This is Glutamate--tRNA ligase from Dichelobacter nodosus (strain VCS1703A).